The chain runs to 373 residues: Alanine racemase (373 aa).

Lys-40 (proton acceptor; specific for D-alanine) is an active-site residue. Lys-40 is modified (N6-(pyridoxal phosphate)lysine). Arg-140 serves as a coordination point for substrate. Tyr-268 serves as the catalytic Proton acceptor; specific for L-alanine. Met-315 contacts substrate.

The protein belongs to the alanine racemase family. The cofactor is pyridoxal 5'-phosphate.

The enzyme catalyses L-alanine = D-alanine. Its pathway is amino-acid biosynthesis; D-alanine biosynthesis; D-alanine from L-alanine: step 1/1. Catalyzes the interconversion of L-alanine and D-alanine. May also act on other amino acids. In Limosilactobacillus fermentum (strain NBRC 3956 / LMG 18251) (Lactobacillus fermentum), this protein is Alanine racemase (alr).